The primary structure comprises 2155 residues: MNYSSFLRIWVSFIFALVQHQAQPRELMYPFWQNDTKTPKVDDGSSSEIKLAIPVFFFGVPYRTVYVNNNGVVSFNVLVSQFTPESFPLTDGRAFVAPFWADVHNGIRGEIYYRETMEPAILKRATKDIRKYFKDMATFSATWVFIVTWEEVTFYGGSSTTPVNTFQAVLVSDGSYTFTLFNYYEINWTTGTASGGDPLTGLGGVMAQAGFNGGNLTNFFSLPGSRTPEIVNIQETTNVNVPGRWAFKVDGKEIDPANGCTSRGQFLRRGEVFWDDLNCTVKCRCLDFNNEIYCQEASCSPYEVCEPKGKFFYCSAVETSTCVVFGEPHYHTFDGFLFHFQGSCAYLLARQCLQTSSLPFFSVEAKNEHRRGSAVSWVKELSVEVNGYKILIPKGSYGRVKVNDLVTSLPVTLDLGTVKIYQSGISTAVETDFGLLVTFDGQHYASISVPGSYINSTCGLCGNYNKNPLDDFLRPDGRPAMSVLDLGESWRVYHADWKCDSGCVDNCTQCDAATEALYFGSDYCGFLNKTDGPLWECGTVVDPTAFVHSCVYDLCSVRDNGTLLCQAIQAYALVCQALGIPIGDWRTQTGCVSTVQCPSFSHYSVCTSSCPDTCSDLTASRNCATPCTEGCECNQGFVLSTSQCVPLHKCGCDFDGHYYTMGEFFWATANCTVQCLCEEGGDVYCFNKTCGSGEVCAVEDGYQGCFPKRETVCLLSQNQVLHTFDGASYAFPSEFSYTLLKTCPERPEYLEIDINKKKPDAGPAWLRGLRILVADQEVKIGGIGASEVKLNGQEVELPFFHPSGKLEIYRNKNSTTVESKGVVTVQYSDIGLLYIRLSTTYFNCTGGLCGFYNANASDEFCLPNGKCTDNLAVFLESWTTFEEICNGECGDLLKACNNDSELLKFYRSRSRCGIINDPSNSSFLECHGVVNVTAYYRTCLFRLCQSGGNESELCDSVARYASACKNADVEVGPWRTYDFCPLECPENSHFEECITCTETCETLTLGPICVDSCSEGCQCDEGYALLGSQCVTRSECGCNFEGHQLATNETFWVDLDCQIFCYCSGTDNRVHCETIPCKDDEYCMEEGGLYYCQARTDASCIVSGYGHYLTFDGFPFDFQTSCPLILCTTGSRPSSDSFPKFVVTAKNEDRDPSLALWVKQVDVTVFGYSIVIHRAYKHTVLVNSERLYLPLKLGQGKINIFSFGFHVVVETDFGLKVVYDWKTFLSITVPRSMQNSTYGLCGRYNGNPDDDLEMPMGLLASSVNEFGQSWVKRDTFCQVGCGDRCPSCAKVEGFSKVQQLCSLIPNQNAAFSKCHSKVNPTFFYKNCLFDSCIDGGAVQTACSWLQNYASTCQTQGITVTGWRNYTSCTVTCPPNSHYESCVSVCQPRCAAIRLKSDCSHYCVEGCHCDAGYVLNGKSCILPHSCGCYSDGKYYEPKQLFWNSDCTRRCRCFRRNVIQCDPRQCKSDEECALRNGVRGCFSTKTSYCLAAGGGVFRTFDGAFLRFPANCAFVLSTICQKLPDISFQLIINFDKWSAPNLTIISPVYFYINEEQILINDRNTVKVNGTQVNVPFITGLATKIYSSEGFLVIDTSPDIQIYYNGFNVIKISISERLQNKVCGLCGNFNGDLTDDYVTLRGKPVVSSVVLAQSWKTNGMQKRPLAPSCNELQFSQYAAMCDNVHIQKMQGDGYCLKLTDMKGFFQPCYGLLDPLPFYESCYLDGCYSHKKFQLCGSLAAYGEACRSFGILSTEWIEKENCSGVVEDPCVGADCPNRTCELGNGRELCGCIEPPPYGNNSHDIIDAEVTCKAAQMEVSISKCKLFQLGFEREGVRINDRQCTGIEGEDFISFQINNTKGNCGNIVQSNGTHIMYKNTLWIESANNTGNIITRDRTINVEFSCAYELDIKISLDSVVKPMLSVINLTVPTQEGSFITKMALYKNASYKHPYRQGEVVLTTRDVLYVGVFVVGADATHLILTLNKCYATPTRDSNDKLRYFIIEGGCQNLKDNTIGIEENAVSLTCRFHVTVFKFIGDYDEVHLHCAVSLCDSEKYSCKITCPHNSRIATDYTKEPKEQIISVGPIRRKRLDWCEDNGGCEQICTSRVDGPLCSCVTGTLQEDGKSCRASNSSMELQVWTLLLIMIQISLWHFVYKSGTTS.

Positions 1-22 (MNYSSFLRIWVSFIFALVQHQA) are cleaved as a signal peptide. N-linked (GlcNAc...) asparagine glycans are attached at residues N34, N187, N215, N278, N455, N506, N528, and N560. The 155-residue stretch at 98-252 (PFWADVHNGI…GRWAFKVDGK (155 aa)) folds into the NIDO domain. Residues 260–314 (CTSRGQFLRRGEVFWDDLNCTVKCRCLDFNNEIYCQEASCSPYEVCEPKGKFFYC) form the VWFC domain. A VWFD 1 domain is found at 320-500 (STCVVFGEPH…RVYHADWKCD (181 aa)). 2 cysteine pairs are disulfide-bonded: C322-C461 and C344-C499. The 54-residue stretch at 597–650 (CPSFSHYSVCTSSCPDTCSDLTASRNCATPCTEGCECNQGFVLSTSQCVPLHKC) folds into the TIL 1 domain. Residues N670, N687, N813, N843, N855, N898, N920, N931, and N949 are each glycosylated (N-linked (GlcNAc...) asparagine). The region spanning 711–886 (TVCLLSQNQV…SWTTFEEICN (176 aa)) is the VWFD 2 domain. A disulfide bridge connects residues C713 and C849. Positions 984–1036 (CPENSHFEECITCTETCETLTLGPICVDSCSEGCQCDEGYALLGSQCVTRSEC) constitute a TIL 2 domain. 3 N-linked (GlcNAc...) asparagine glycosylation sites follow: N1048, N1235, and N1364. The VWFD 3 domain occupies 1098–1278 (ASCIVSGYGH…SWVKRDTFCQ (181 aa)). Disulfide bonds link C1100–C1241 and C1122–C1277. One can recognise a TIL 3 domain in the interval 1372–1425 (CPPNSHYESCVSVCQPRCAAIRLKSDCSHYCVEGCHCDAGYVLNGKSCILPHSC). One can recognise a VWFD 4 domain in the interval 1485–1666 (SYCLAAGGGV…QKRPLAPSCN (182 aa)). 7 disulfides stabilise this stretch: C1487-C1622, C1509-C1665, C1717-C1775, C1741-C1784, C1786-C1818, C1806-C1898, and C1837-C1857. Residues N1538, N1565, N1756, N1772, N1794, N1851, N1864, N1880, N1920, and N1939 are each glycosylated (N-linked (GlcNAc...) asparagine). The ZP domain occupies 1805-2059 (TCKAAQMEVS…YSCKITCPHN (255 aa)). 3 disulfides stabilise this stretch: C1980–C2040, C2001–C2056, and C2045–C2052. N2091 is lipidated: GPI-anchor amidated asparagine. The propeptide at 2092 to 2155 (GGCEQICTSR…HFVYKSGTTS (64 aa)) is removed in mature form.

In terms of assembly, may form homomeric filament after self-association or heteromeric filament after association with beta-tectorin. Interacts with CEACAM16. The presence of a hydrophobic C-terminus preceded by a potential cleavage site strongly suggests that tectorins are synthesized as glycosylphosphatidylinositol-linked, membrane-bound precursors. Tectorins are targeted to the apical surface of the inner ear epithelia by the lipid and proteolytically released into the extracellular compartment.

The protein resides in the cell membrane. Its subcellular location is the secreted. It is found in the extracellular space. The protein localises to the extracellular matrix. In terms of biological role, one of the major non-collagenous components of the tectorial membrane. The tectorial membrane is an extracellular matrix of the inner ear that covers the neuroepithelium of the cochlea and contacts the stereocilia bundles of specialized sensory hair cells. Sound induces movement of these hair cells relative to the tectorial membrane, deflects the stereocilia and leads to fluctuations in hair-cell membrane potential, transducing sound into electrical signals. The chain is Alpha-tectorin (TECTA) from Homo sapiens (Human).